A 385-amino-acid chain; its full sequence is Glucans biosynthesis protein C (385 aa).

10 helical membrane-spanning segments follow: residues 17-37, 60-80, 91-111, 137-157, 173-193, 212-232, 239-259, 274-294, 311-331, and 338-358; these read AWLM…SHTW, MQVF…RYPL, VGIP…IMLQ, ISHL…VWIF, KFSM…YAVI, FIVM…LAFI, LFTT…VAYL, TESV…FSFG, ASLF…AYIT, and WLGF…LYEI.

It belongs to the acyltransferase 3 family. OpgC subfamily.

It is found in the cell membrane. It participates in glycan metabolism; osmoregulated periplasmic glucan (OPG) biosynthesis. Necessary for the succinyl substitution of periplasmic glucans. Could catalyze the transfer of succinyl residues from the cytoplasmic side of the membrane to the nascent glucan backbones on the periplasmic side of the membrane. This is Glucans biosynthesis protein C from Shigella sonnei (strain Ss046).